Reading from the N-terminus, the 121-residue chain is Putative iron-sulfur cluster insertion protein ErpA (121 aa).

Residues Cys-49, Cys-113, and Cys-115 each contribute to the iron-sulfur cluster site.

This sequence belongs to the HesB/IscA family. In terms of assembly, homodimer. Iron-sulfur cluster is required as a cofactor.

Required for insertion of 4Fe-4S clusters. This Methylibium petroleiphilum (strain ATCC BAA-1232 / LMG 22953 / PM1) protein is Putative iron-sulfur cluster insertion protein ErpA.